A 112-amino-acid polypeptide reads, in one-letter code: Putative pterin-4-alpha-carbinolamine dehydratase (112 aa).

It belongs to the pterin-4-alpha-carbinolamine dehydratase family.

The enzyme catalyses (4aS,6R)-4a-hydroxy-L-erythro-5,6,7,8-tetrahydrobiopterin = (6R)-L-erythro-6,7-dihydrobiopterin + H2O. This chain is Putative pterin-4-alpha-carbinolamine dehydratase, found in Shewanella sp. (strain MR-7).